Consider the following 161-residue polypeptide: Putative 2'-deoxynucleoside 5'-phosphate N-hydrolase 1 (161 aa).

Residues 27–33, Tyr-42, His-60, Glu-106, and 128–130 each bind substrate; these read FLSGSIR and SSM.

This sequence belongs to the 2'-deoxynucleoside 5'-phosphate N-hydrolase 1 family. In terms of assembly, monomer and homodimer.

The enzyme catalyses a pyrimidine 2'-deoxyribonucleoside 5'-phosphate + H2O = a pyrimidine nucleobase + 2-deoxy-D-ribose 5-phosphate. It catalyses the reaction a purine 2'-deoxyribonucleoside 5'-phosphate + H2O = a purine nucleobase + 2-deoxy-D-ribose 5-phosphate. Functionally, catalyzes the cleavage of the N-glycosidic bond of deoxyribonucleoside 5'-monophosphates to yield deoxyribose 5-phosphate and a purine or pyrimidine base. The chain is Putative 2'-deoxynucleoside 5'-phosphate N-hydrolase 1 from Methanosarcina mazei (strain ATCC BAA-159 / DSM 3647 / Goe1 / Go1 / JCM 11833 / OCM 88) (Methanosarcina frisia).